We begin with the raw amino-acid sequence, 253 residues long: Large ribosomal subunit protein uL10m (253 aa).

The transit peptide at 1–24 (MANLMQRSLPLTTTRTPVLQFLRF) directs the protein to the mitochondrion.

It belongs to the universal ribosomal protein uL10 family. Component of the mitochondrial ribosome large subunit (39S) which comprises a 16S rRNA and about 50 distinct proteins.

Its subcellular location is the mitochondrion. The sequence is that of Large ribosomal subunit protein uL10m (mRpL10) from Drosophila pseudoobscura pseudoobscura (Fruit fly).